Consider the following 453-residue polypeptide: Ribulose bisphosphate carboxylase large chain (453 aa).

The propeptide occupies 1–2 (MS). P3 carries the post-translational modification N-acetylproline. K14 bears the N6,N6,N6-trimethyllysine mark. The substrate site is built by N123 and T173. K175 (proton acceptor) is an active-site residue. Position 177 (K177) interacts with substrate. Mg(2+) contacts are provided by K201, D203, and E204. At K201 the chain carries N6-carboxylysine. H294 functions as the Proton acceptor in the catalytic mechanism. R295, H327, and S379 together coordinate substrate.

It belongs to the RuBisCO large chain family. Type I subfamily. In terms of assembly, heterohexadecamer of 8 large chains and 8 small chains; disulfide-linked. The disulfide link is formed within the large subunit homodimers. The cofactor is Mg(2+). Post-translationally, the disulfide bond which can form in the large chain dimeric partners within the hexadecamer appears to be associated with oxidative stress and protein turnover.

It is found in the plastid. The protein localises to the chloroplast. The enzyme catalyses 2 (2R)-3-phosphoglycerate + 2 H(+) = D-ribulose 1,5-bisphosphate + CO2 + H2O. The catalysed reaction is D-ribulose 1,5-bisphosphate + O2 = 2-phosphoglycolate + (2R)-3-phosphoglycerate + 2 H(+). Functionally, ruBisCO catalyzes two reactions: the carboxylation of D-ribulose 1,5-bisphosphate, the primary event in carbon dioxide fixation, as well as the oxidative fragmentation of the pentose substrate in the photorespiration process. Both reactions occur simultaneously and in competition at the same active site. This Asperula laevigata (Smooth woodruff) protein is Ribulose bisphosphate carboxylase large chain.